Consider the following 355-residue polypeptide: Phosphoserine aminotransferase (355 aa).

R41 provides a ligand contact to L-glutamate. Pyridoxal 5'-phosphate contacts are provided by residues 75–76 (AS), W99, T147, D166, and Q189. Position 190 is an N6-(pyridoxal phosphate)lysine (K190). 231-232 (NT) provides a ligand contact to pyridoxal 5'-phosphate.

This sequence belongs to the class-V pyridoxal-phosphate-dependent aminotransferase family. SerC subfamily. Homodimer. Pyridoxal 5'-phosphate is required as a cofactor.

Its subcellular location is the cytoplasm. The catalysed reaction is O-phospho-L-serine + 2-oxoglutarate = 3-phosphooxypyruvate + L-glutamate. It carries out the reaction 4-(phosphooxy)-L-threonine + 2-oxoglutarate = (R)-3-hydroxy-2-oxo-4-phosphooxybutanoate + L-glutamate. The protein operates within amino-acid biosynthesis; L-serine biosynthesis; L-serine from 3-phospho-D-glycerate: step 2/3. Its pathway is cofactor biosynthesis; pyridoxine 5'-phosphate biosynthesis; pyridoxine 5'-phosphate from D-erythrose 4-phosphate: step 3/5. Catalyzes the reversible conversion of 3-phosphohydroxypyruvate to phosphoserine and of 3-hydroxy-2-oxo-4-phosphonooxybutanoate to phosphohydroxythreonine. The chain is Phosphoserine aminotransferase from Bacteroides thetaiotaomicron (strain ATCC 29148 / DSM 2079 / JCM 5827 / CCUG 10774 / NCTC 10582 / VPI-5482 / E50).